Here is a 157-residue protein sequence, read N- to C-terminus: 2-C-methyl-D-erythritol 2,4-cyclodiphosphate synthase (157 aa).

A divalent metal cation-binding residues include aspartate 8 and histidine 10. 4-CDP-2-C-methyl-D-erythritol 2-phosphate-binding positions include aspartate 8–histidine 10 and histidine 34–serine 35. Position 42 (histidine 42) interacts with a divalent metal cation. 4-CDP-2-C-methyl-D-erythritol 2-phosphate contacts are provided by residues aspartate 56–glycine 58, phenylalanine 61–aspartate 65, alanine 100–alanine 106, threonine 132–glutamate 135, phenylalanine 139, and arginine 142.

The protein belongs to the IspF family. In terms of assembly, homotrimer. A divalent metal cation serves as cofactor.

It carries out the reaction 4-CDP-2-C-methyl-D-erythritol 2-phosphate = 2-C-methyl-D-erythritol 2,4-cyclic diphosphate + CMP. It functions in the pathway isoprenoid biosynthesis; isopentenyl diphosphate biosynthesis via DXP pathway; isopentenyl diphosphate from 1-deoxy-D-xylulose 5-phosphate: step 4/6. In terms of biological role, involved in the biosynthesis of isopentenyl diphosphate (IPP) and dimethylallyl diphosphate (DMAPP), two major building blocks of isoprenoid compounds. Catalyzes the conversion of 4-diphosphocytidyl-2-C-methyl-D-erythritol 2-phosphate (CDP-ME2P) to 2-C-methyl-D-erythritol 2,4-cyclodiphosphate (ME-CPP) with a corresponding release of cytidine 5-monophosphate (CMP). This is 2-C-methyl-D-erythritol 2,4-cyclodiphosphate synthase from Geobacter sulfurreducens (strain ATCC 51573 / DSM 12127 / PCA).